Reading from the N-terminus, the 168-residue chain is Endoribonuclease YbeY (168 aa).

Positions 126, 130, and 136 each coordinate Zn(2+).

This sequence belongs to the endoribonuclease YbeY family. Requires Zn(2+) as cofactor.

Its subcellular location is the cytoplasm. Its function is as follows. Single strand-specific metallo-endoribonuclease involved in late-stage 70S ribosome quality control and in maturation of the 3' terminus of the 16S rRNA. The chain is Endoribonuclease YbeY from Agrobacterium fabrum (strain C58 / ATCC 33970) (Agrobacterium tumefaciens (strain C58)).